The sequence spans 518 residues: Cell wall biosynthesis protein LcpA (518 aa).

At 1–31 the chain is on the cytoplasmic side; it reads MTEKYRPVRDIKPAPAAMQSTKQAGHPVFRS. A helical transmembrane segment spans residues 32-52; it reads VVAFVSVLVLLVSGLGYLAVG. The Periplasmic segment spans residues 53 to 518; the sequence is KVDGVASGNL…AGGDGPRCVN (466 aa). The interval 485 to 518 is disordered; the sequence is AVTSSTVGQPGADVGEPIESPEFDAGGDGPRCVN.

This sequence belongs to the LytR/CpsA/Psr (LCP) family. Forms homodimers and homotetramers.

Its subcellular location is the cell inner membrane. Its function is as follows. Involved in cell wall biosynthesis. May be responsible for the transfer of arabinogalactan onto peptidoglycan. In vitro, has pyrophosphatase activity. The protein is Cell wall biosynthesis protein LcpA of Corynebacterium glutamicum (strain ATCC 13032 / DSM 20300 / JCM 1318 / BCRC 11384 / CCUG 27702 / LMG 3730 / NBRC 12168 / NCIMB 10025 / NRRL B-2784 / 534).